A 536-amino-acid chain; its full sequence is Cytochrome P450 78A7 (536 aa).

The helical transmembrane segment at 36–56 (LFLAVVFLSIVTWALAGGGGV) threads the bilayer. A heme-binding site is contributed by cysteine 481.

This sequence belongs to the cytochrome P450 family. Heme serves as cofactor.

Its subcellular location is the membrane. Its function is as follows. Functions probably in association with CYP78A5 in regulating relative growth of the shoot apical meristem and plant organs via a non-cell-autonomous signal. The sequence is that of Cytochrome P450 78A7 (CYP78A7) from Arabidopsis thaliana (Mouse-ear cress).